Here is a 295-residue protein sequence, read N- to C-terminus: Protoheme IX farnesyltransferase 2 (295 aa).

Transmembrane regions (helical) follow at residues 9 to 29 (ITKP…FFLA), 36 to 56 (FALF…GCVF), 83 to 103 (LTLA…LLYV), 108 to 128 (LAAF…SLWL), 135 to 155 (GTLV…CAVS), 163 to 183 (VTLL…IAIF), 209 to 229 (IVLY…GGYA), 230 to 250 (GLGY…MAWG), and 264 to 284 (VFGF…VDSQ).

This sequence belongs to the UbiA prenyltransferase family. Protoheme IX farnesyltransferase subfamily.

It localises to the cell inner membrane. The enzyme catalyses heme b + (2E,6E)-farnesyl diphosphate + H2O = Fe(II)-heme o + diphosphate. Its pathway is porphyrin-containing compound metabolism; heme O biosynthesis; heme O from protoheme: step 1/1. Functionally, converts heme B (protoheme IX) to heme O by substitution of the vinyl group on carbon 2 of heme B porphyrin ring with a hydroxyethyl farnesyl side group. This chain is Protoheme IX farnesyltransferase 2, found in Pseudomonas entomophila (strain L48).